The primary structure comprises 435 residues: tRNA-2-methylthio-N(6)-dimethylallyladenosine synthase (435 aa).

The region spanning 5–120 is the MTTase N-terminal domain; sequence KKLFIETLGC…ISEVLHKERA (116 aa). Residues cysteine 14, cysteine 51, cysteine 83, cysteine 152, cysteine 156, and cysteine 159 each contribute to the [4Fe-4S] cluster site. The region spanning 138 to 372 is the Radical SAM core domain; it reads RTSPYKAYIN…NLAVNILDEK (235 aa). The TRAM domain maps to 374 to 435; sequence KTHLGKIYRV…RTILSGEIVG (62 aa).

Belongs to the methylthiotransferase family. MiaB subfamily. Monomer. [4Fe-4S] cluster serves as cofactor.

Its subcellular location is the cytoplasm. The catalysed reaction is N(6)-dimethylallyladenosine(37) in tRNA + (sulfur carrier)-SH + AH2 + 2 S-adenosyl-L-methionine = 2-methylsulfanyl-N(6)-dimethylallyladenosine(37) in tRNA + (sulfur carrier)-H + 5'-deoxyadenosine + L-methionine + A + S-adenosyl-L-homocysteine + 2 H(+). Catalyzes the methylthiolation of N6-(dimethylallyl)adenosine (i(6)A), leading to the formation of 2-methylthio-N6-(dimethylallyl)adenosine (ms(2)i(6)A) at position 37 in tRNAs that read codons beginning with uridine. The sequence is that of tRNA-2-methylthio-N(6)-dimethylallyladenosine synthase from Sulfurimonas denitrificans (strain ATCC 33889 / DSM 1251) (Thiomicrospira denitrificans (strain ATCC 33889 / DSM 1251)).